The following is a 372-amino-acid chain: Ligninase A (372 aa).

The N-terminal stretch at 1–21 (MAFKQLVAAISLALSLTTANA) is a signal peptide. The propeptide occupies 22–28 (AVVKEKR). Disulfide bonds link C31–C43, C42–C313, C62–C148, and C277–C345. Catalysis depends on H75, which acts as the Proton acceptor. Residues D76, G94, D96, and S98 each coordinate Ca(2+). H204 is a heme b binding site. 5 residues coordinate Ca(2+): S205, D222, T224, I227, and D229. A glycan (N-linked (GlcNAc...) asparagine) is linked at N285.

This sequence belongs to the peroxidase family. Ligninase subfamily. The cofactor is heme b. Requires Ca(2+) as cofactor.

The catalysed reaction is 1-(3,4-dimethoxyphenyl)-2-(2-methoxyphenoxy)propane-1,3-diol + H2O2 = 3,4-dimethoxybenzaldehyde + guaiacol + glycolaldehyde + H2O. It carries out the reaction 2 (3,4-dimethoxyphenyl)methanol + H2O2 = 2 (3,4-dimethoxyphenyl)methanol radical + 2 H2O. The protein operates within secondary metabolite metabolism; lignin degradation. Depolymerization of lignin. Catalyzes the C(alpha)-C(beta) cleavage of the propyl side chains of lignin. This chain is Ligninase A (LIPA), found in Phanerodontia chrysosporium (White-rot fungus).